The primary structure comprises 80 residues: Translational regulator CsrA (80 aa).

The protein belongs to the CsrA/RsmA family. Homodimer; the beta-strands of each monomer intercalate to form a hydrophobic core, while the alpha-helices form wings that extend away from the core.

Its subcellular location is the cytoplasm. In terms of biological role, a translational regulator that binds mRNA to regulate translation initiation and/or mRNA stability. Usually binds in the 5'-UTR at or near the Shine-Dalgarno sequence preventing ribosome-binding, thus repressing translation. Its main target seems to be the major flagellin gene, while its function is anatagonized by FliW. The chain is Translational regulator CsrA from Desulforamulus reducens (strain ATCC BAA-1160 / DSM 100696 / MI-1) (Desulfotomaculum reducens).